We begin with the raw amino-acid sequence, 440 residues long: Homocitrate synthase, mitochondrial (440 aa).

Residues 1 to 23 (MSENNEFQSVTESTTAPTTSNPY) are compositionally biased toward polar residues. Residues 1 to 27 (MSENNEFQSVTESTTAPTTSNPYGPNP) are disordered. In terms of domain architecture, Pyruvate carboxyltransferase spans 37-290 (FQLIDSTLRE…RSKYKLHKIR (254 aa)). Arginine 45 contributes to the 2-oxoglutarate binding site. Glutamate 46 provides a ligand contact to Mg(2+). 3 residues coordinate 2-oxoglutarate: histidine 105, arginine 165, and threonine 199. Mg(2+) contacts are provided by histidine 226 and histidine 228. Histidine 323 (proton acceptor) is an active-site residue. A Phosphoserine modification is found at serine 399. Phosphothreonine is present on threonine 410.

Belongs to the alpha-IPM synthase/homocitrate synthase family. Homocitrate synthase LYS20/LYS21 subfamily. Requires Mg(2+) as cofactor. The cofactor is Mn(2+).

It is found in the mitochondrion. The catalysed reaction is acetyl-CoA + 2-oxoglutarate + H2O = (2R)-homocitrate + CoA + H(+). It participates in amino-acid biosynthesis; L-lysine biosynthesis via AAA pathway; L-alpha-aminoadipate from 2-oxoglutarate: step 1/5. Its function is as follows. Catalyzes the aldol-type condensation of 2-oxoglutarate with acetyl-CoA to yield homocitrate. Carries out the first step of the alpha-aminoadipate (AAA) lysine biosynthesis pathway. The chain is Homocitrate synthase, mitochondrial (LYS21) from Saccharomyces cerevisiae (strain ATCC 204508 / S288c) (Baker's yeast).